A 759-amino-acid chain; its full sequence is 1,4-alpha-glucan branching enzyme GlgB (759 aa).

D431 (nucleophile) is an active-site residue. The Proton donor role is filled by E484.

Belongs to the glycosyl hydrolase 13 family. GlgB subfamily. As to quaternary structure, monomer.

The catalysed reaction is Transfers a segment of a (1-&gt;4)-alpha-D-glucan chain to a primary hydroxy group in a similar glucan chain.. The protein operates within glycan biosynthesis; glycogen biosynthesis. Functionally, catalyzes the formation of the alpha-1,6-glucosidic linkages in glycogen by scission of a 1,4-alpha-linked oligosaccharide from growing alpha-1,4-glucan chains and the subsequent attachment of the oligosaccharide to the alpha-1,6 position. The polypeptide is 1,4-alpha-glucan branching enzyme GlgB (Prochlorococcus marinus (strain MIT 9211)).